We begin with the raw amino-acid sequence, 151 residues long: Ubiquitin-conjugating enzyme E2 2 (151 aa).

The disordered stretch occupies residues 1-26 (MSTSARRRLMRDFKRMQTDPPAGVSA). A UBC core domain is found at 4–150 (SARRRLMRDF…VRETVEKSWE (147 aa)). Cys88 acts as the Glycyl thioester intermediate in catalysis.

The protein belongs to the ubiquitin-conjugating enzyme family.

It localises to the cytoplasm. The protein resides in the nucleus. It carries out the reaction S-ubiquitinyl-[E1 ubiquitin-activating enzyme]-L-cysteine + [E2 ubiquitin-conjugating enzyme]-L-cysteine = [E1 ubiquitin-activating enzyme]-L-cysteine + S-ubiquitinyl-[E2 ubiquitin-conjugating enzyme]-L-cysteine.. Its pathway is protein modification; protein ubiquitination. In terms of biological role, catalyzes the covalent attachment of ubiquitin to other proteins. Plays a role in transcription regulation by catalyzing the monoubiquitination of histone H2B to form H2BK123ub1. H2BK123ub1 gives a specific tag for epigenetic transcriptional activation and is also a prerequisite for H3K4me and H3K79me formation. Also involved in postreplication repair of UV-damaged DNA, in N-end rule-dependent protein degradation and in sporulation. This Aspergillus fumigatus (strain ATCC MYA-4609 / CBS 101355 / FGSC A1100 / Af293) (Neosartorya fumigata) protein is Ubiquitin-conjugating enzyme E2 2 (ubc2).